We begin with the raw amino-acid sequence, 178 residues long: UPF0228 protein MA_4223 (178 aa).

The protein belongs to the UPF0228 family.

This is UPF0228 protein MA_4223 from Methanosarcina acetivorans (strain ATCC 35395 / DSM 2834 / JCM 12185 / C2A).